A 243-amino-acid polypeptide reads, in one-letter code: tRNA (guanine-N(1)-)-methyltransferase (243 aa).

S-adenosyl-L-methionine-binding positions include Gly108 and 127-132; that span reads LGDFVL.

Belongs to the RNA methyltransferase TrmD family. In terms of assembly, homodimer.

It localises to the cytoplasm. The enzyme catalyses guanosine(37) in tRNA + S-adenosyl-L-methionine = N(1)-methylguanosine(37) in tRNA + S-adenosyl-L-homocysteine + H(+). In terms of biological role, specifically methylates guanosine-37 in various tRNAs. In Streptococcus pyogenes serotype M2 (strain MGAS10270), this protein is tRNA (guanine-N(1)-)-methyltransferase.